The following is a 46-amino-acid chain: Large ribosomal subunit protein bL36 (46 aa).

Belongs to the bacterial ribosomal protein bL36 family.

The polypeptide is Large ribosomal subunit protein bL36 (Salmonella agona (strain SL483)).